We begin with the raw amino-acid sequence, 119 residues long: Urotensin-2B (119 aa).

The N-terminal stretch at 1-28 is a signal peptide; that stretch reads MNKILSSTVCFGLLTLLSVLSFLQSVHG. A propeptide spanning residues 29–109 is cleaved from the precursor; that stretch reads RPYLTQGNEI…VDGLFSSHPS (81 aa). Cys-113 and Cys-118 form a disulfide bridge.

It belongs to the urotensin-2 family.

The protein resides in the secreted. Its function is as follows. Potent vasoconstrictor. The polypeptide is Urotensin-2B (UTS2B) (Homo sapiens (Human)).